We begin with the raw amino-acid sequence, 177 residues long: Large ribosomal subunit protein uL6 (177 aa).

The protein belongs to the universal ribosomal protein uL6 family. In terms of assembly, part of the 50S ribosomal subunit.

Functionally, this protein binds to the 23S rRNA, and is important in its secondary structure. It is located near the subunit interface in the base of the L7/L12 stalk, and near the tRNA binding site of the peptidyltransferase center. This chain is Large ribosomal subunit protein uL6, found in Actinobacillus succinogenes (strain ATCC 55618 / DSM 22257 / CCUG 43843 / 130Z).